Here is a 172-residue protein sequence, read N- to C-terminus: Small ribosomal subunit protein uS5 (172 aa).

In terms of domain architecture, S5 DRBM spans 7-70; sequence VVEHLVNVNR…QNAKKYMIEV (64 aa).

Belongs to the universal ribosomal protein uS5 family. Part of the 30S ribosomal subunit. Contacts proteins S4 and S8.

Functionally, with S4 and S12 plays an important role in translational accuracy. In terms of biological role, located at the back of the 30S subunit body where it stabilizes the conformation of the head with respect to the body. This is Small ribosomal subunit protein uS5 from Orientia tsutsugamushi (strain Boryong) (Rickettsia tsutsugamushi).